A 379-amino-acid chain; its full sequence is Homoserine O-succinyltransferase (379 aa).

The 310-residue stretch at asparagine 51 to leucine 360 folds into the AB hydrolase-1 domain. Serine 157 acts as the Nucleophile in catalysis. Arginine 227 provides a ligand contact to substrate. Catalysis depends on residues aspartate 323 and histidine 356. Substrate is bound at residue aspartate 357.

It belongs to the AB hydrolase superfamily. MetX family. As to quaternary structure, homodimer.

It is found in the cytoplasm. It catalyses the reaction L-homoserine + succinyl-CoA = O-succinyl-L-homoserine + CoA. Its pathway is amino-acid biosynthesis; L-methionine biosynthesis via de novo pathway; O-succinyl-L-homoserine from L-homoserine: step 1/1. Its activity is regulated as follows. Requires MetW for activity. Its function is as follows. Transfers a succinyl group from succinyl-CoA to L-homoserine, forming succinyl-L-homoserine. This is Homoserine O-succinyltransferase from Pseudomonas syringae pv. syringae (strain B728a).